A 387-amino-acid chain; its full sequence is MVFAFWKVFLILSCLAGQVSVVQVTIPDGFVNVTVGSNVTLICIYTTTVASREQLSIQWSFFHKKEMEPISIYFSQGGQAVAIGQFKDRITGSNDPGNASITISHMQPADSGIYICDVNNPPDFLGQNQGILNVSVLVKPSKPLCSVQGRPETGHTISLSCLSALGTPSPVYYWHKLEGRDIVPVKENFNPTTGILVIGNLTNFEQGYYQCTAINRLGNSSCEIDLTSSHPEVGIIVGALIGSLVGAAIIISVVCFARNKAKAKAKERNSKTIAELEPMTKINPRGESEAMPREDATQLEVTLPSSIHETGPDTIQEPDYEPKPTQEPAPEPAPGSEPMAVPDLDIELELEPETQSELEPEPEPEPESEPGVVVEPLSEDEKGVVKA.

Positions 1–21 (MVFAFWKVFLILSCLAGQVSV) are cleaved as a signal peptide. Residues 22–132 (VQVTIPDGFV…DFLGQNQGIL (111 aa)) form the Ig-like V-type domain. Topologically, residues 22–232 (VQVTIPDGFV…EIDLTSSHPE (211 aa)) are extracellular. N-linked (GlcNAc...) asparagine glycans are attached at residues N32 and N38. A disulfide bridge connects residues C43 and C116. N-linked (GlcNAc...) asparagine glycans are attached at residues N133, N200, and N219. The region spanning 140–227 (PSKPLCSVQG…GNSSCEIDLT (88 aa)) is the Ig-like C2-type domain. The cysteines at positions 161 and 211 are disulfide-linked. A helical transmembrane segment spans residues 233 to 253 (VGIIVGALIGSLVGAAIIISV). Topologically, residues 254–387 (VCFARNKAKA…SEDEKGVVKA (134 aa)) are cytoplasmic. Positions 266-387 (KERNSKTIAE…SEDEKGVVKA (122 aa)) are disordered. Residues 284–296 (PRGESEAMPREDA) are compositionally biased toward basic and acidic residues. The span at 299-308 (LEVTLPSSIH) shows a compositional bias: polar residues. The segment covering 325 to 335 (TQEPAPEPAPG) has biased composition (pro residues). Over residues 344–368 (LDIELELEPETQSELEPEPEPEPES) the composition is skewed to acidic residues.

In terms of processing, highly N-glycosylated. Appears not to contain significant amounts of O-linked carbohydrates or sialic acid in its sugar moieties. In terms of tissue distribution, detected only in stomach mucosa and testis, and to a much lesser level in pancreas (at protein level). Detected in gastric cancers (31%), esophageal carcinomas (50%) and ovarian cancers (23%).

The protein resides in the membrane. This chain is V-set and immunoglobulin domain-containing protein 1 (VSIG1), found in Homo sapiens (Human).